Consider the following 509-residue polypeptide: MGSRSRARQVAAALGFVGLLLAALGAVMIVMVPSIIKQQVLKNVRIDPSSLSFNMWKEIPVPFYLSVYFFDVINPNEILQGQKPQVRERGPYVYREFRHKSNITFNDNDTVSFLEYRSYQFQPHKSRGLESDYIVIPNILVLSASVMMEDRPMSLKLIMTFAFSALGERAFVNRTVGEIMWGYEDPLIHLINKYFPNMFPFKGKFGLFAELNNSDSGLFTVFTGVKDFSRIHLVDKWNGLSKVNFWHSDQCNMINGTSGQMWAPFMTPESSLEFYSPEACRSMKLIYKEQGVFEGIPTFRFVAPNTLFANGSVYPPNEGFCPCMESGIQNVSTCRFNAPLFLSHPHFYNADPVLAEAVSGLHPNTEEHSLFLDIHPVTGIPMNCSVKLQLSLYIKSVKGIGQTGKIEPVVLPLLWFAESGAMEGETLQTFYTQLVLMPKVLHYAQYVLLALGCVLLFIPIVYQIRSQEKCYLFWSSSKKGSKDKEAIQAYSESLMTPAPKGTVLQEARL.

Residues 1-11 (MGSRSRARQVA) are Cytoplasmic-facing. Residues 12–32 (AALGFVGLLLAALGAVMIVMV) form a helical membrane-spanning segment. Residues 33 to 439 (PSIIKQQVLK…FYTQLVLMPK (407 aa)) are Extracellular-facing. 8 N-linked (GlcNAc...) asparagine glycosylation sites follow: N102, N108, N173, N212, N255, N310, N330, and N383. A disulfide bridge links C251 with C384. Residues 440 to 460 (VLHYAQYVLLALGCVLLFIPI) traverse the membrane as a helical segment. Topologically, residues 461–509 (VYQIRSQEKCYLFWSSSKKGSKDKEAIQAYSESLMTPAPKGTVLQEARL) are cytoplasmic.

The protein belongs to the CD36 family. As to quaternary structure, the C-terminal region binds to PDZK1. N-glycosylated. In terms of processing, the six cysteines of the extracellular domain are all involved in intramolecular disulfide bonds.

It is found in the cell membrane. It localises to the membrane. Its subcellular location is the caveola. In terms of biological role, receptor for different ligands such as phospholipids, cholesterol ester, lipoproteins, phosphatidylserine and apoptotic cells. Receptor for HDL, mediating selective uptake of cholesteryl ether and HDL-dependent cholesterol efflux. Also facilitates the flux of free and esterified cholesterol between the cell surface and apoB-containing lipoproteins and modified lipoproteins, although less efficiently than HDL. May be involved in the phagocytosis of apoptotic cells, via its phosphatidylserine binding activity. This Sus scrofa (Pig) protein is Scavenger receptor class B member 1 (SCARB1).